Consider the following 453-residue polypeptide: Phosphoglucosamine mutase (453 aa).

Serine 105 acts as the Phosphoserine intermediate in catalysis. Residues serine 105, aspartate 244, aspartate 246, and aspartate 248 each contribute to the Mg(2+) site. Serine 105 carries the post-translational modification Phosphoserine.

The protein belongs to the phosphohexose mutase family. It depends on Mg(2+) as a cofactor. Post-translationally, activated by phosphorylation.

The catalysed reaction is alpha-D-glucosamine 1-phosphate = D-glucosamine 6-phosphate. Functionally, catalyzes the conversion of glucosamine-6-phosphate to glucosamine-1-phosphate. The protein is Phosphoglucosamine mutase of Chromohalobacter salexigens (strain ATCC BAA-138 / DSM 3043 / CIP 106854 / NCIMB 13768 / 1H11).